Consider the following 236-residue polypeptide: Small ribosomal subunit protein uS2c (236 aa).

The protein belongs to the universal ribosomal protein uS2 family.

The protein resides in the plastid. Its subcellular location is the chloroplast. This is Small ribosomal subunit protein uS2c (rps2) from Chaetosphaeridium globosum (Charophycean green alga).